A 357-amino-acid chain; its full sequence is Large ribosomal subunit protein uL10 (357 aa).

The disordered stretch occupies residues 311–357 (MVSRSAEAAERKEKEEEEEEEAEEEEAEEEEEEEEEEAAAGLGALFG). Residues 325–348 (EEEEEEEAEEEEAEEEEEEEEEEA) are compositionally biased toward acidic residues.

Belongs to the universal ribosomal protein uL10 family. Part of the 50S ribosomal subunit. Forms part of the ribosomal stalk which helps the ribosome interact with GTP-bound translation factors. Forms a heptameric L10(L12)2(L12)2(L12)2 complex, where L10 forms an elongated spine to which the L12 dimers bind in a sequential fashion.

Forms part of the ribosomal stalk, playing a central role in the interaction of the ribosome with GTP-bound translation factors. This Methanopyrus kandleri (strain AV19 / DSM 6324 / JCM 9639 / NBRC 100938) protein is Large ribosomal subunit protein uL10.